The chain runs to 935 residues: Phosphoenolpyruvate carboxylase (935 aa).

Catalysis depends on residues histidine 161 and lysine 593.

This sequence belongs to the PEPCase type 1 family. Mg(2+) is required as a cofactor.

The enzyme catalyses oxaloacetate + phosphate = phosphoenolpyruvate + hydrogencarbonate. Functionally, forms oxaloacetate, a four-carbon dicarboxylic acid source for the tricarboxylic acid cycle. The polypeptide is Phosphoenolpyruvate carboxylase (Mycobacterium avium (strain 104)).